The primary structure comprises 254 residues: Small ribosomal subunit protein uS2 (254 aa).

It belongs to the universal ribosomal protein uS2 family.

This Borrelia recurrentis (strain A1) protein is Small ribosomal subunit protein uS2.